The sequence spans 336 residues: Flavonoid 4'-O-methyltransferase 5 (336 aa).

S-adenosyl-L-methionine contacts are provided by Tyr140 and Asp203. Catalysis depends on His241, which acts as the Proton acceptor.

The protein belongs to the class I-like SAM-binding methyltransferase superfamily. Cation-independent O-methyltransferase family. As to quaternary structure, homodimer. In terms of tissue distribution, expressed in leaves.

It carries out the reaction genkwanin + S-adenosyl-L-methionine = apigenin 4',7-dimethyl ether + S-adenosyl-L-homocysteine. It catalyses the reaction cirsiliol + S-adenosyl-L-methionine = eupatorin + S-adenosyl-L-homocysteine + H(+). The catalysed reaction is cirsimaritin + S-adenosyl-L-methionine = salvigenin + S-adenosyl-L-homocysteine + H(+). The enzyme catalyses scutellarein 7-methyl ether + S-adenosyl-L-methionine = ladanein + S-adenosyl-L-homocysteine + H(+). It carries out the reaction (2S)-sakuranetin + S-adenosyl-L-methionine = (2S)-naringenin 4',7-dimethyl ether + S-adenosyl-L-homocysteine + H(+). The protein operates within flavonoid metabolism. Its activity is regulated as follows. Substrate inhibition by genkwanin (GENK) at concentrations above 10 mM. Flavonoid 4'-O-methyltransferase involved in the biosynthesis of polymethoxylated flavonoids natural products such as nevadensin and salvigenin, aroma compounds which contribute to the flavor of sweet basil, and exhibit pharmacological activities such as anti-allergic, anti-oxidant, antibacterial, anti-proliferative, and anti-inflammatory effects. Catalyzes S-adenosylmethionine-dependent regioselective 4'-O-methylation of flavonoids; active on various hydroxylated flavonoid substrates, including scutellarein-7-methyl ether (SCU7Me) and, with a lower efficiency, cirsimaritin (CIRM), sakuranetin (NAR7Me), ladanein (LAD) and genkwanin (GENK). The polypeptide is Flavonoid 4'-O-methyltransferase 5 (Ocimum basilicum (Sweet basil)).